The sequence spans 61 residues: Probable tautomerase SSP1389 (61 aa).

Pro2 functions as the Proton acceptor; via imino nitrogen in the catalytic mechanism.

It belongs to the 4-oxalocrotonate tautomerase family.

This is Probable tautomerase SSP1389 from Staphylococcus saprophyticus subsp. saprophyticus (strain ATCC 15305 / DSM 20229 / NCIMB 8711 / NCTC 7292 / S-41).